A 158-amino-acid polypeptide reads, in one-letter code: Endoribonuclease YbeY (158 aa).

Histidine 119, histidine 123, and aspartate 129 together coordinate Zn(2+).

This sequence belongs to the endoribonuclease YbeY family. Zn(2+) serves as cofactor.

It is found in the cytoplasm. Functionally, single strand-specific metallo-endoribonuclease involved in late-stage 70S ribosome quality control and in maturation of the 3' terminus of the 16S rRNA. The polypeptide is Endoribonuclease YbeY (Chlamydia pneumoniae (Chlamydophila pneumoniae)).